We begin with the raw amino-acid sequence, 62 residues long: Photosystem II reaction center X protein (62 aa).

The helical transmembrane segment at Ile26–Phe46 threads the bilayer.

This sequence belongs to the PsbX family. Type 2 subfamily. PSII consists of a core antenna complex that captures photons, and an electron transfer chain that converts photonic excitation into a charge separation. PSII forms dimeric complexes.

The protein resides in the cellular thylakoid membrane. Its function is as follows. Involved in the binding and/or turnover of quinones at the Q(B) site of Photosystem II. In Prochlorococcus marinus (strain MIT 9515), this protein is Photosystem II reaction center X protein.